A 235-amino-acid chain; its full sequence is tRNA (guanine-N(7)-)-methyltransferase (235 aa).

S-adenosyl-L-methionine is bound by residues Gly60, 83–84, 116–117, and Leu136; these read EI and NA. The active site involves Asp139. 214-216 contributes to the S-adenosyl-L-methionine binding site; that stretch reads SEE.

Belongs to the class I-like SAM-binding methyltransferase superfamily. TrmB family.

It is found in the nucleus. The enzyme catalyses guanosine(46) in tRNA + S-adenosyl-L-methionine = N(7)-methylguanosine(46) in tRNA + S-adenosyl-L-homocysteine. Its pathway is tRNA modification; N(7)-methylguanine-tRNA biosynthesis. In terms of biological role, catalyzes the formation of N(7)-methylguanine at position 46 (m7G46) in tRNA. The chain is tRNA (guanine-N(7)-)-methyltransferase from Anopheles gambiae (African malaria mosquito).